Reading from the N-terminus, the 219-residue chain is Transmembrane protein 179B (219 aa).

The next 4 membrane-spanning stretches (helical) occupy residues P6–A26, I69–F89, L105–G125, and A167–I187. The tract at residues I195 to P219 is disordered.

It belongs to the TMEM179 family.

It localises to the membrane. This is Transmembrane protein 179B (tmem179b) from Danio rerio (Zebrafish).